A 593-amino-acid polypeptide reads, in one-letter code: Multidrug resistance-like ATP-binding protein MdlB (593 aa).

The Cytoplasmic segment spans residues methionine 1–leucine 25. An ABC transmembrane type-1 domain is found at leucine 25–glutamine 310. A helical membrane pass occupies residues glycine 26 to isoleucine 46. The Periplasmic portion of the chain corresponds to serine 47–lysine 62. The chain crosses the membrane as a helical span at residues valine 63–tyrosine 83. Over alanine 84–valine 140 the chain is Cytoplasmic. A helical transmembrane segment spans residues threonine 141 to phenylalanine 161. The Periplasmic segment spans residues serine 162 to aspartate 164. A helical membrane pass occupies residues tryptophan 165–tyrosine 185. Over glutamine 186–proline 254 the chain is Cytoplasmic. A helical membrane pass occupies residues leucine 255–alanine 275. Residues serine 276–threonine 278 lie on the Periplasmic side of the membrane. The chain crosses the membrane as a helical span at residues isoleucine 279–isoleucine 299. Residues glutamate 300–alanine 593 lie on the Cytoplasmic side of the membrane. An ABC transporter domain is found at isoleucine 341–leucine 574. Glycine 374–serine 381 lines the ATP pocket.

Belongs to the ABC transporter superfamily. Drug exporter-2 (TC 3.A.1.117) family.

The protein resides in the cell inner membrane. The catalysed reaction is ATP + H2O + xenobioticSide 1 = ADP + phosphate + xenobioticSide 2.. The protein is Multidrug resistance-like ATP-binding protein MdlB (mdlB) of Escherichia coli O6:H1 (strain CFT073 / ATCC 700928 / UPEC).